The chain runs to 166 residues: Small ribosomal subunit protein uS5 (166 aa).

The region spanning Leu-11–Val-74 is the S5 DRBM domain.

Belongs to the universal ribosomal protein uS5 family. As to quaternary structure, part of the 30S ribosomal subunit. Contacts proteins S4 and S8.

With S4 and S12 plays an important role in translational accuracy. In terms of biological role, located at the back of the 30S subunit body where it stabilizes the conformation of the head with respect to the body. The chain is Small ribosomal subunit protein uS5 from Sodalis glossinidius (strain morsitans).